We begin with the raw amino-acid sequence, 219 residues long: Ribosomal RNA large subunit methyltransferase E (219 aa).

Gly60, Trp62, Asp85, Asp101, and Asp126 together coordinate S-adenosyl-L-methionine. Lys166 (proton acceptor) is an active-site residue.

Belongs to the class I-like SAM-binding methyltransferase superfamily. RNA methyltransferase RlmE family.

Its subcellular location is the cytoplasm. The catalysed reaction is uridine(2552) in 23S rRNA + S-adenosyl-L-methionine = 2'-O-methyluridine(2552) in 23S rRNA + S-adenosyl-L-homocysteine + H(+). Specifically methylates the uridine in position 2552 of 23S rRNA at the 2'-O position of the ribose in the fully assembled 50S ribosomal subunit. This is Ribosomal RNA large subunit methyltransferase E from Bordetella avium (strain 197N).